A 598-amino-acid chain; its full sequence is Probable translation initiation factor IF-2 (598 aa).

The tr-type G domain occupies 3–225 (LRCPIVSVLG…GLAQKFLEQK (223 aa)). Residues 12-19 (GHVDHGKT) are G1. 12–19 (GHVDHGKT) is a binding site for GTP. A G2 region spans residues 37 to 41 (GITQH). A G3 region spans residues 76 to 79 (DTPG). GTP-binding positions include 76–80 (DTPGH) and 130–133 (NKVD). The interval 130–133 (NKVD) is G4. A G5 region spans residues 200–202 (SAM).

This sequence belongs to the TRAFAC class translation factor GTPase superfamily. Classic translation factor GTPase family. IF-2 subfamily.

Function in general translation initiation by promoting the binding of the formylmethionine-tRNA to ribosomes. Seems to function along with eIF-2. The protein is Probable translation initiation factor IF-2 of Methanococcus maripaludis (strain C7 / ATCC BAA-1331).